The chain runs to 556 residues: Copine-7 (556 aa).

C2 domains follow at residues 1–128 and 135–262; these read MSGD…TRPL and NAGK…AQWD. Residues D168, D174, D230, D232, and D238 each coordinate Ca(2+). Residues 305–504 enclose the VWFA domain; sequence HCTVAIDFTA…PALRDIVQFV (200 aa). The disordered stretch occupies residues 536 to 556; it reads KDLPPRSLGGQTGEAGPSSAP.

Belongs to the copine family. Ca(2+) serves as cofactor.

The protein resides in the cytoplasm. It is found in the nucleus. Its subcellular location is the cell membrane. Calcium-dependent phospholipid-binding protein that may play a role in calcium-mediated intracellular processes. In Rattus norvegicus (Rat), this protein is Copine-7.